The chain runs to 413 residues: Alpha-1-antitrypsin 1-4 (413 aa).

The N-terminal stretch at 1 to 24 (MTPSISWSLLLLAGLCCLVPSFLA) is a signal peptide. Asn-64, Asn-101, and Asn-265 each carry an N-linked (GlcNAc...) asparagine glycan. The tract at residues 368-387 (AATVLQVATYSMPPIVRFDH) is RCL.

It belongs to the serpin family.

The protein resides in the secreted. In terms of biological role, inhibitor of serine proteases. Can inhibit trypsin and chymotrypsin; relatively ineffective against elastase. This Mus musculus (Mouse) protein is Alpha-1-antitrypsin 1-4 (Serpina1d).